A 264-amino-acid polypeptide reads, in one-letter code: PDZ domain-containing protein 9 (264 aa).

The region spanning valine 22–arginine 109 is the PDZ domain.

This chain is PDZ domain-containing protein 9 (PDZD9), found in Macaca fascicularis (Crab-eating macaque).